An 800-amino-acid chain; its full sequence is Phenylalanine--tRNA ligase beta subunit (800 aa).

One can recognise a tRNA-binding domain in the interval 39 to 154 (TKDIKKLVVG…EAVKPGTDAL (116 aa)). One can recognise a B5 domain in the interval 408-483 (SFVTPIEITA…RIYGYDEIPS (76 aa)). Mg(2+) is bound by residues Asp461, Asp467, Glu470, and Glu471. Residues 708-800 (PRFPGVTRDI…ALKKHGAIIR (93 aa)) enclose the FDX-ACB domain.

It belongs to the phenylalanyl-tRNA synthetase beta subunit family. Type 1 subfamily. In terms of assembly, tetramer of two alpha and two beta subunits. Mg(2+) serves as cofactor.

Its subcellular location is the cytoplasm. The enzyme catalyses tRNA(Phe) + L-phenylalanine + ATP = L-phenylalanyl-tRNA(Phe) + AMP + diphosphate + H(+). The polypeptide is Phenylalanine--tRNA ligase beta subunit (Staphylococcus epidermidis (strain ATCC 12228 / FDA PCI 1200)).